Here is a 245-residue protein sequence, read N- to C-terminus: Large ribosomal subunit protein uL29m (245 aa).

Low complexity-rich tracts occupy residues 36 to 49 (SFNS…TSSS) and 234 to 245 (STKSETTTSKNI). Disordered stretches follow at residues 36-98 (SFNS…NPDH) and 207-245 (RPSP…SKNI).

The protein belongs to the universal ribosomal protein uL29 family. Component of the mitochondrial large ribosomal subunit. Mature mitochondrial ribosomes consist of a small (37S) and a large (54S) subunit. The 37S subunit contains at least 33 different proteins and 1 molecule of RNA (15S). The 54S subunit contains at least 45 different proteins and 1 molecule of RNA (21S).

The protein localises to the mitochondrion. In Coccidioides immitis (strain RS) (Valley fever fungus), this protein is Large ribosomal subunit protein uL29m (MRPL4).